The chain runs to 313 residues: Aspartate carbamoyltransferase catalytic subunit (313 aa).

Residues arginine 58 and threonine 59 each coordinate carbamoyl phosphate. Lysine 86 provides a ligand contact to L-aspartate. Positions 108, 136, and 139 each coordinate carbamoyl phosphate. Positions 169 and 223 each coordinate L-aspartate. Carbamoyl phosphate is bound by residues glycine 265 and proline 266.

The protein belongs to the aspartate/ornithine carbamoyltransferase superfamily. ATCase family. Heterododecamer (2C3:3R2) of six catalytic PyrB chains organized as two trimers (C3), and six regulatory PyrI chains organized as three dimers (R2).

It carries out the reaction carbamoyl phosphate + L-aspartate = N-carbamoyl-L-aspartate + phosphate + H(+). The protein operates within pyrimidine metabolism; UMP biosynthesis via de novo pathway; (S)-dihydroorotate from bicarbonate: step 2/3. Functionally, catalyzes the condensation of carbamoyl phosphate and aspartate to form carbamoyl aspartate and inorganic phosphate, the committed step in the de novo pyrimidine nucleotide biosynthesis pathway. In Anaeromyxobacter dehalogenans (strain 2CP-1 / ATCC BAA-258), this protein is Aspartate carbamoyltransferase catalytic subunit.